Reading from the N-terminus, the 975-residue chain is Ionotropic receptor 21a (975 aa).

A signal peptide spans M1–A21. Residues N67, N177, and N355 are each glycosylated (N-linked (GlcNAc...) asparagine). Residues W433–S453 traverse the membrane as a helical segment. N464 carries an N-linked (GlcNAc...) asparagine glycan. Residues I505–I525 form a helical membrane-spanning segment. 3 N-linked (GlcNAc...) asparagine glycosylation sites follow: N561, N586, and N611. A helical membrane pass occupies residues M708–V728. Disordered stretches follow at residues A757–S839 and S911–M938. Polar residues-rich tracts occupy residues G760–N777 and V788–A800. N-linked (GlcNAc...) asparagine glycosylation is found at N763 and N797.

The protein belongs to the glutamate-gated ion channel (TC 1.A.10.1) family. In terms of tissue distribution, in both female and male antenna, expressed specifically in 3 sensory neurons of flagellomere 13 segment (at protein level).

It is found in the cell projection. The protein resides in the cilium membrane. In terms of biological role, integral part of a neural sensory system in the antenna that provides the neural basis for the response to environmental changes in temperature (thermosensation). Specifically, required for thermosensing by the cooling cell. Plays a role in heat seeking and heat-stimulated blood feeding behavior. The protein is Ionotropic receptor 21a of Anopheles gambiae (African malaria mosquito).